Reading from the N-terminus, the 235-residue chain is Carboxy-S-adenosyl-L-methionine synthase (235 aa).

S-adenosyl-L-methionine-binding positions include Y35, 60–62, 84–85, 110–111, N125, and R192; these read GCS, DN, and DI.

It belongs to the class I-like SAM-binding methyltransferase superfamily. Cx-SAM synthase family. As to quaternary structure, homodimer.

The enzyme catalyses prephenate + S-adenosyl-L-methionine = carboxy-S-adenosyl-L-methionine + 3-phenylpyruvate + H2O. Functionally, catalyzes the conversion of S-adenosyl-L-methionine (SAM) to carboxy-S-adenosyl-L-methionine (Cx-SAM). The sequence is that of Carboxy-S-adenosyl-L-methionine synthase from Sulfurimonas denitrificans (strain ATCC 33889 / DSM 1251) (Thiomicrospira denitrificans (strain ATCC 33889 / DSM 1251)).